A 694-amino-acid polypeptide reads, in one-letter code: U-box domain-containing protein 1 (694 aa).

The U-box domain occupies 292 to 366 (NIPDEFRCPI…HQWCYENNVK (75 aa)). ARM repeat units follow at residues 392-432 (SENK…LLAK), 435-474 (MDNRRIIAEVGAIPFLVTLLVSKDSRIQEHVVTALFNLSI), 476-516 (DNNK…SLSM), 519-558 (DCKVQIGASSRAIPALVGLLKEGTIIGKRDAATALFNLAV), 560-599 (NPNKLSIVKSGAVTLLVELLMDDKAGITDDSLAVLAVLLG), 601-641 (SEGL…GLCK), and 646-685 (LVAMRLLANPRSIPSLQSLAADGSLRARRKADALLRLLNR).

In terms of assembly, interacts with LYK3. Binds to NORK/DMI2. Phosphorylated by LYK3 in vitro. Phosphorylated by NORK/DMI2. As to expression, present ubiquitously at very low levels during nonsymbiotic growth. Accumulates in roots and nodules during symbiotic growth with rhizobia and mycorrhiza.

The protein localises to the cell membrane. The catalysed reaction is S-ubiquitinyl-[E2 ubiquitin-conjugating enzyme]-L-cysteine + [acceptor protein]-L-lysine = [E2 ubiquitin-conjugating enzyme]-L-cysteine + N(6)-ubiquitinyl-[acceptor protein]-L-lysine.. The protein operates within protein modification; protein ubiquitination. Functionally, exhibits U-box-dependent E3 ubiquitin ligase activity in vitro. Negatively modulates successive stages of infection and development of rhizobial (e.g. Sinorhizobium meliloti) and arbuscular mycorrhizal fungi (AM, e.g. Rhizophagus irregularis) symbioses, in an ubiquitin ligase activity-dependent manner. Negative regulator of the LYK3 signaling pathway leading to nitrogen-fixing symbiosis (e.g. infection and nodulation) by rhizobia. May be involved in the discrimination of rhizobium strains producing variant Nod factors. This chain is U-box domain-containing protein 1, found in Medicago truncatula (Barrel medic).